Reading from the N-terminus, the 820-residue chain is Sucrose synthase 2 (820 aa).

The segment at 276–753 (MVFNVVILSP…GLKRIYEKYT (478 aa)) is GT-B glycosyltransferase.

Belongs to the glycosyltransferase 1 family. Plant sucrose synthase subfamily.

It catalyses the reaction an NDP-alpha-D-glucose + D-fructose = a ribonucleoside 5'-diphosphate + sucrose + H(+). Its function is as follows. Sucrose-cleaving enzyme that provides UDP-glucose and fructose for various metabolic pathways. This Tulipa gesneriana (Garden tulip) protein is Sucrose synthase 2.